The primary structure comprises 95 residues: Aspartyl/glutamyl-tRNA(Asn/Gln) amidotransferase subunit C (95 aa).

The protein belongs to the GatC family. In terms of assembly, heterotrimer of A, B and C subunits.

The enzyme catalyses L-glutamyl-tRNA(Gln) + L-glutamine + ATP + H2O = L-glutaminyl-tRNA(Gln) + L-glutamate + ADP + phosphate + H(+). It carries out the reaction L-aspartyl-tRNA(Asn) + L-glutamine + ATP + H2O = L-asparaginyl-tRNA(Asn) + L-glutamate + ADP + phosphate + 2 H(+). Its function is as follows. Allows the formation of correctly charged Asn-tRNA(Asn) or Gln-tRNA(Gln) through the transamidation of misacylated Asp-tRNA(Asn) or Glu-tRNA(Gln) in organisms which lack either or both of asparaginyl-tRNA or glutaminyl-tRNA synthetases. The reaction takes place in the presence of glutamine and ATP through an activated phospho-Asp-tRNA(Asn) or phospho-Glu-tRNA(Gln). In Syntrophus aciditrophicus (strain SB), this protein is Aspartyl/glutamyl-tRNA(Asn/Gln) amidotransferase subunit C.